A 61-amino-acid polypeptide reads, in one-letter code: Large ribosomal subunit protein bL32 (61 aa).

Residues 1–19 show a composition bias toward basic residues; it reads MAHPKRRQSKTRTAKRRTH. The segment at 1–20 is disordered; sequence MAHPKRRQSKTRTAKRRTHD.

Belongs to the bacterial ribosomal protein bL32 family.

This chain is Large ribosomal subunit protein bL32, found in Porphyromonas gingivalis (strain ATCC 33277 / DSM 20709 / CIP 103683 / JCM 12257 / NCTC 11834 / 2561).